The chain runs to 2188 residues: Tiggrin (2188 aa).

The signal sequence occupies residues 1 to 18 (MRALGGITLLLAVAICQG). 4 coiled-coil regions span residues 570–635 (SRLE…EHIK), 1009–1050 (LKNL…EIES), 1312–1343 (TFVE…EIEE), and 1613–1641 (KQQR…AQYH). The interval 1984 to 2188 (IFSKDRGDQP…FWEKLKEKLG (205 aa)) is disordered. Over residues 1985 to 1998 (FSKDRGDQPPHTYD) the composition is skewed to basic and acidic residues. A Cell attachment site motif is present at residues 1989-1991 (RGD). The span at 2000-2009 (SFVEGDEPGL) shows a compositional bias: acidic residues. Positions 2016-2033 (PRPPNPAPIVSTPKPPLP) are enriched in pro residues. 2 stretches are compositionally biased toward low complexity: residues 2057–2077 (GSAS…ASAS) and 2091–2101 (QQEVDLGQQQQ). Residues 2115-2139 (GQQTQVEDTDWNQQAEDLGQQQQVQ) are compositionally biased toward polar residues. Residues 2148–2165 (QTQGHSSSSNSRSQPLQQ) show a composition bias toward low complexity. The span at 2179–2188 (FWEKLKEKLG) shows a compositional bias: basic and acidic residues.

Post-translationally, O-glycosylation by pgant3 is required for proper secretion and localization to the basal cell layer interface during wing development. As to expression, in embryos, expressed in the apodemes (muscle attachment sites) of the major longitudinal muscles 4, 6, 7, 12 and 13 and the wide dorsal oblique muscles 9 and 10, in hemocytes, in fat body cells, in basement membranes surrounding the gut and in the commissures of the ventral nerve cord. Expressed in larval imaginal wing disk and in pupal wing. In adult flies, expressed in the jump muscle (at protein level).

The protein localises to the secreted. It localises to the extracellular space. The protein resides in the extracellular matrix. Its function is as follows. Functions as a ligand for integrin alpha-PS2/beta-PS. Required in larvae for proper muscle structure and function. Involved in the regulation of cell adhesion during wing development. The chain is Tiggrin from Drosophila melanogaster (Fruit fly).